Here is a 453-residue protein sequence, read N- to C-terminus: ATP-dependent RNA helicase dbp8 (453 aa).

The Q motif signature appears at 7–35 (KSFSDLGISPWLIDTLKALAIYEPTDIQE). In terms of domain architecture, Helicase ATP-binding spans 38 to 214 (IAQILEGRNC…YQPQKNNKPP (177 aa)). Residue 51–58 (AKTGSGKT) participates in ATP binding. The DEAD box signature appears at 160 to 163 (DEAD). Residues 230-393 (TLQQSYIFVS…YEHVSENKML (164 aa)) form the Helicase C-terminal domain. Residues 413 to 453 (RGFGERRQKRNEKRLMANGISNKLKNSGRKKKAKNTLSTEK) form a disordered region.

This sequence belongs to the DEAD box helicase family. DDX49/DBP8 subfamily.

The protein resides in the nucleus. It localises to the nucleolus. The enzyme catalyses ATP + H2O = ADP + phosphate + H(+). Functionally, ATP-binding RNA helicase involved in 40S ribosomal subunit biogenesis and is required for the normal formation of 18S rRNAs through pre-rRNA processing at A0, A1 and A2 sites. Required for vegetative growth. This chain is ATP-dependent RNA helicase dbp8 (dbp8), found in Schizosaccharomyces pombe (strain 972 / ATCC 24843) (Fission yeast).